A 196-amino-acid chain; its full sequence is Putative 3-methyladenine DNA glycosylase (196 aa).

Belongs to the DNA glycosylase MPG family.

This is Putative 3-methyladenine DNA glycosylase from Bacillus licheniformis (strain ATCC 14580 / DSM 13 / JCM 2505 / CCUG 7422 / NBRC 12200 / NCIMB 9375 / NCTC 10341 / NRRL NRS-1264 / Gibson 46).